Here is a 109-residue protein sequence, read N- to C-terminus: ILGPRGLMPSPKTGTVTKNVEQAIKDAKRGRVEFKVDKAGNIHMPVGKVSFDKAKLLDNIYAAIDAVVRAKPPGAKGQYVKNIALSLTMSPSVKIDINETLRKLQERAA.

It belongs to the universal ribosomal protein uL1 family. As to quaternary structure, part of the 50S ribosomal subunit.

Its function is as follows. Binds directly to 23S rRNA. The L1 stalk is quite mobile in the ribosome, and is involved in E site tRNA release. In terms of biological role, protein L1 is also a translational repressor protein, it controls the translation of the L11 operon by binding to its mRNA. The chain is Large ribosomal subunit protein uL1 (rplA) from Aquifex pyrophilus.